We begin with the raw amino-acid sequence, 446 residues long: Light-independent protochlorophyllide reductase subunit N (446 aa).

Residues cysteine 22, cysteine 47, and cysteine 107 each contribute to the [4Fe-4S] cluster site.

Belongs to the BchN/ChlN family. As to quaternary structure, protochlorophyllide reductase is composed of three subunits; ChlL, ChlN and ChlB. Forms a heterotetramer of two ChlB and two ChlN subunits. [4Fe-4S] cluster is required as a cofactor.

Its subcellular location is the plastid. It localises to the chloroplast. It carries out the reaction chlorophyllide a + oxidized 2[4Fe-4S]-[ferredoxin] + 2 ADP + 2 phosphate = protochlorophyllide a + reduced 2[4Fe-4S]-[ferredoxin] + 2 ATP + 2 H2O. It functions in the pathway porphyrin-containing compound metabolism; chlorophyll biosynthesis (light-independent). In terms of biological role, component of the dark-operative protochlorophyllide reductase (DPOR) that uses Mg-ATP and reduced ferredoxin to reduce ring D of protochlorophyllide (Pchlide) to form chlorophyllide a (Chlide). This reaction is light-independent. The NB-protein (ChlN-ChlB) is the catalytic component of the complex. This Mesostigma viride (Green alga) protein is Light-independent protochlorophyllide reductase subunit N.